Reading from the N-terminus, the 425-residue chain is O-methyltransferase AMT9 (425 aa).

S-adenosyl-L-methionine-binding positions include 257-258 (GG), aspartate 280, 306-307 (DF), arginine 322, and arginine 323. Histidine 326 acts as the Proton acceptor in catalysis.

The protein belongs to the class I-like SAM-binding methyltransferase superfamily. Cation-independent O-methyltransferase family.

The protein operates within mycotoxin biosynthesis. Its function is as follows. O-methyltransferase; part of the gene clusters that mediate the biosynthesis of AM-toxins, host-selective toxins (HSTs) causing Alternaria blotch on apple, a worldwide distributed disease. AM-toxins are cyclic depsipeptides containing the 3 residues 2-hydroxy-isovaleric acid (2-HIV), dehydroalanine, L-alanine which are common for all 3 AM-toxins I to III. The fourth precursor is L-alpha-amino-methoxyphenyl-valeric acid (L-Amv) for AM-toxin I, L-alpha-amino-phenyl-valeric acid (L-Apv) for AM-toxin II, and L-alpha-amino-hydroxyphenyl-valeric acid (L-Ahv) for AM-toxin III. AM-toxins have two target sites for affecting susceptible apple cells; they cause invagination of the plasma membrane and electrolyte loss and chloroplast disorganization. The non-ribosomal peptide synthetase AMT1 contains 4 catalytic modules and is responsible for activation of each residue in AM-toxin. The aldo-keto reductase AMT2 catalyzes the conversion of 2-keto-isovaleric acid (2-KIV) to 2-hydroxy-isovaleric acid (2-HIV), one of the precursor residues incorporated by AMT1 during AM-toxin biosynthesis, by reduction of its ketone to an alcohol. The cytochrome P450 monooxygenase AMT3 and the thioesterase AMT4 are also important for AM-toxin production, but their exact function within the AM-toxin biosynthesis are not known yet. Up to 21 proteins (including AMT1 to AMT4) are predicted to be involved in AM-toxin biosynthesis since their expression ishighly up-regulated in AM-toxin-producing cultures. This is O-methyltransferase AMT9 from Alternaria alternata (Alternaria rot fungus).